We begin with the raw amino-acid sequence, 530 residues long: Probable cytochrome P450 519A1 (530 aa).

A helical transmembrane segment spans residues 1 to 21 (MESIINLIFYIIIFLILIDFL). Cys-476 lines the heme pocket.

It belongs to the cytochrome P450 family. Heme serves as cofactor.

Its subcellular location is the membrane. The polypeptide is Probable cytochrome P450 519A1 (cyp519A1) (Dictyostelium discoideum (Social amoeba)).